The chain runs to 195 residues: Cysteine/O-acetylserine efflux protein (195 aa).

Topologically, residues 1-9 (MTPMLLSAF) are periplasmic. The chain crosses the membrane as a helical span at residues 10–32 (WTYTLITALTPGPNNILALSAAT). The Cytoplasmic portion of the chain corresponds to 33 to 46 (AHGFRQSIRVLAGM). The helical transmembrane segment at 47-67 (SLGFLVVMLLCAGIAFSLAVI) threads the bilayer. Topologically, residues 68 to 69 (DP) are periplasmic. A helical transmembrane segment spans residues 70-90 (AIIHLLSWVGAAYILWLAWKI). Over 91–104 (ATSPAADEKVRPKP) the chain is Cytoplasmic. A helical membrane pass occupies residues 105 to 125 (VGFWVSFGLQFVNVKIILYGI). Residues 126–141 (TALSTFVLPQTQALNW) lie on the Periplasmic side of the membrane. A helical transmembrane segment spans residues 142-162 (VIGVSILLALIGTFGNVCWAL). Topologically, residues 163 to 176 (AGHLFQRAFRHYGR) are cytoplasmic. A helical membrane pass occupies residues 177 to 194 (QLNIILALLLVYCAVRIF). Y195 is a topological domain (periplasmic).

The protein belongs to the Rht family.

The protein localises to the cell inner membrane. The enzyme catalyses O-acetyl-L-serine(in) = O-acetyl-L-serine(out). The catalysed reaction is L-cysteine(in) = L-cysteine(out). In terms of biological role, exporter of O-acetylserine (OAS) and cysteine. The chain is Cysteine/O-acetylserine efflux protein (eamB) from Salmonella paratyphi A (strain ATCC 9150 / SARB42).